Reading from the N-terminus, the 563-residue chain is Developmental regulatory protein wetA (563 aa).

2 stretches are compositionally biased toward polar residues: residues 54 to 69 (EQSP…THPS) and 160 to 175 (HKQS…SQFQ). Disordered stretches follow at residues 54–81 (EQSP…SLPP), 112–176 (ASST…QFQK), 272–318 (SNNS…PDLQ), 334–356 (PQRQ…IQNT), 430–494 (PQLH…SPKG), and 516–538 (GVAP…DRRR). A compositionally biased stretch (low complexity) spans 272–305 (SNNSTVTSSPPSADDIFPSPHSSDPQSMSSWHSD). Positions 430 to 441 (PQLHPQSRSPSL) are enriched in polar residues.

Belongs to the wetA family.

In terms of biological role, brlA, abaA and wetA are pivotal regulators of conidiophore development and conidium maturation. They act individually and together to regulate their own expression and that of numerous other sporulation-specific genes. The protein is Developmental regulatory protein wetA of Aspergillus oryzae (strain ATCC 42149 / RIB 40) (Yellow koji mold).